The primary structure comprises 908 residues: Probable RNA-directed DNA polymerase from transposon X-element (908 aa).

The Reverse transcriptase domain occupies 481 to 752; sequence AIVRLQYFPY…NAAKYLGVLL (272 aa). A disordered region spans residues 883-908; sequence RPPRRLNRRQPRDLITRSPLTRVRRS.

The cofactor is Mg(2+). Mn(2+) is required as a cofactor.

The enzyme catalyses DNA(n) + a 2'-deoxyribonucleoside 5'-triphosphate = DNA(n+1) + diphosphate. This Drosophila melanogaster (Fruit fly) protein is Probable RNA-directed DNA polymerase from transposon X-element (X-element\ORF2).